A 553-amino-acid polypeptide reads, in one-letter code: ATP synthase F(1) complex subunit alpha, mitochondrial (553 aa).

The N-terminal 43 residues, 1–43, are a transit peptide targeting the mitochondrion; that stretch reads MLSVRVAAAVARALPRRAGLVSKNALGSSFVAARNLHASNTRL. Residues S53 and S65 each carry the phosphoserine modification. At S76 the chain carries Phosphoserine; alternate. S76 carries O-linked (GlcNAc) serine; alternate glycosylation. At S106 the chain carries Phosphoserine. N6-acetyllysine occurs at positions 123, 126, and 132. Position 134 is a phosphothreonine (T134). At K161 the chain carries N6-acetyllysine; alternate. Position 161 is an N6-succinyllysine; alternate (K161). At S166 the chain carries Phosphoserine. K167 carries the post-translational modification N6-acetyllysine; alternate. An N6-succinyllysine; alternate modification is found at K167. Position 184 is a phosphoserine (S184). Omega-N-methylarginine is present on R204. Positions 215, 217, 218, 219, and 220 each coordinate ATP. T219 serves as a coordination point for Mg(2+). N6-acetyllysine; alternate is present on residues K230 and K239. N6-succinyllysine; alternate is present on residues K230 and K239. At K240 the chain carries N6-acetyllysine. An N6-acetyllysine; alternate mark is found at K261 and K305. N6-succinyllysine; alternate occurs at positions 261 and 305. A Mg(2+)-binding site is contributed by D312. At K427 the chain carries N6-acetyllysine; alternate. An N6-succinyllysine; alternate modification is found at K427. At K434 the chain carries N6-acetyllysine. The ATP site is built by Q473 and Q475. N6-acetyllysine; alternate occurs at positions 498, 506, 531, and 539. An N6-succinyllysine; alternate mark is found at K498, K506, K531, and K539. K541 is modified (N6-acetyllysine).

The protein belongs to the ATPase alpha/beta chains family. Homotrimer. Component of the ATP synthase complex composed at least of ATP5F1A/subunit alpha, ATP5F1B/subunit beta, ATP5MC1/subunit c (homooctomer), MT-ATP6/subunit a, MT-ATP8/subunit 8, ATP5ME/subunit e, ATP5MF/subunit f, ATP5MG/subunit g, ATP5MK/subunit k, ATP5MJ/subunit j, ATP5F1C/subunit gamma, ATP5F1D/subunit delta, ATP5F1E/subunit epsilon, ATP5PF/subunit F6, ATP5PB/subunit b, ATP5PD/subunit d, ATP5PO/subunit OSCP. ATP synthase complex consists of a soluble F(1) head domain (subunits alpha(3) and beta(3)) - the catalytic core - and a membrane F(0) domain - the membrane proton channel (subunits c, a, 8, e, f, g, k and j). These two domains are linked by a central stalk (subunits gamma, delta, and epsilon) rotating inside the F1 region and a stationary peripheral stalk (subunits F6, b, d, and OSCP). Interacts with ATPAF2. Interacts with HRG; the interaction occurs on the surface of T-cells and alters the cell morphology when associated with concanavalin (in vitro). Interacts with PLG (angiostatin peptide); the interaction inhibits most of the angiogenic properties of angiostatin. Interacts with BLOC1S1. Interacts with BCL2L1 isoform BCL-X(L); the interaction mediates the association of BCL2L1 isoform BCL-X(L) with the mitochondrial membrane F(1)F(0) ATP synthase and enhances neurons metabolic efficiency. Interacts with CLN5 and PPT1. Interacts with S100A1; this interaction increases F1-ATPase activity. Interacts with ABCB7; this interaction allows the regulation of cellular iron homeostasis and cellular reactive oxygen species (ROS) levels in cardiomyocytes. Acetylated on lysine residues. BLOC1S1 is required for acetylation. As to expression, expressed in heart (at protein level).

Its subcellular location is the mitochondrion. The protein resides in the mitochondrion inner membrane. It localises to the cell membrane. Functionally, subunit alpha, of the mitochondrial membrane ATP synthase complex (F(1)F(0) ATP synthase or Complex V) that produces ATP from ADP in the presence of a proton gradient across the membrane which is generated by electron transport complexes of the respiratory chain. ATP synthase complex consist of a soluble F(1) head domain - the catalytic core - and a membrane F(1) domain - the membrane proton channel. These two domains are linked by a central stalk rotating inside the F(1) region and a stationary peripheral stalk. During catalysis, ATP synthesis in the catalytic domain of F(1) is coupled via a rotary mechanism of the central stalk subunits to proton translocation. In vivo, can only synthesize ATP although its ATP hydrolase activity can be activated artificially in vitro. With the catalytic subunit beta (ATP5F1B), forms the catalytic core in the F(1) domain. Subunit alpha does not bear the catalytic high-affinity ATP-binding sites. The protein is ATP synthase F(1) complex subunit alpha, mitochondrial of Sus scrofa (Pig).